The primary structure comprises 338 residues: Clavatol oxidase claD (338 aa).

The 107-residue stretch at 193 to 299 folds into the Fe2OG dioxygenase domain; sequence DPMSLLRLLH…RYSVVFFYDG (107 aa). Fe cation contacts are provided by His222, Asp224, and His280. Arg290 is a 2-oxoglutarate binding site.

This sequence belongs to the iron/ascorbate-dependent oxidoreductase family. Requires Fe(2+) as cofactor.

It catalyses the reaction clavatol + 2-oxoglutarate + O2 = hydroxyclavatol + succinate + CO2. The protein operates within secondary metabolite biosynthesis. Functionally, 2-oxoglutarate-dependent dioxygenase; part of the cla gene cluster that produces clavatol and ortho-quinone methide. The clavatol biosynthesis cluster cla and the terrestric acid cluster tra are both involved in the production of peniphenones and penilactones. The non-reducing PKS claF is responsible for the formation of clavatol from successive condensations of 3 malonyl-CoA units, presumably with a simple acetyl-CoA starter unit, and 2 methylation steps. The esterase claE probably collaborates with claF by catalyzing the hydrolysis of ACP-bound acyl intermediates to free the ACP from stalled intermediates. The clavatol oxidase claD then converts clavatol to hydroxyclavatol. Spontaneous dehydration of hydroxyclavatol leads to the accumulation of the highly active ortho-quinone methide. On the other hand, the PKS-NRPS hybrid traA is involved in the formation of crustosic acid, with the help of traB and traD. The polyketide synthase module (PKS) of traA is responsible for the synthesis of the polyketide backbone via the condensation of an acetyl-CoA starter unit with 3 malonyl-CoA units. The downstream nonribosomal peptide synthetase (NRPS) module then amidates the carboxyl end of the polyketide with L-malic acid. Because traA lacks a designated enoylreductase (ER) domain, the required activity is provided the enoyl reductase traG. Crustosic acid undergoes decarboxylation and isomerization to the terrestric acid, catalyzed by the 2-oxoglutarate-dependent dioxygenase traH. Both acids are further converted to the 2 gamma-butyrolactones (R)-5-methyltetronic acid and (S)-5-carboxylmethyltetronic acid, with involvement of the cytochrome P450 monooxygenase claJ. Spontaneous addition of the methide to these gamma-butyrolactones leads to peniphenone D and penilactone D, which undergo again stereospecific attacking by methide to give penilactones A and B. In Penicillium crustosum (Blue mold fungus), this protein is Clavatol oxidase claD.